A 460-amino-acid chain; its full sequence is GTPase Der (460 aa).

EngA-type G domains follow at residues 21 to 187 (PRVV…FSVD) and 198 to 373 (VRLA…AQLN). Residues 27 to 34 (GRPNVGKS), 74 to 78 (DTSGF), 141 to 144 (NKTE), 204 to 211 (GKPNTGKS), 251 to 255 (DTAGI), and 316 to 319 (NKWD) contribute to the GTP site. Residues 374–457 (TKVETSALNT…PVKLTIRKNC (84 aa)) form the KH-like domain.

It belongs to the TRAFAC class TrmE-Era-EngA-EngB-Septin-like GTPase superfamily. EngA (Der) GTPase family. In terms of assembly, associates with the 50S ribosomal subunit.

GTPase that plays an essential role in the late steps of ribosome biogenesis. This chain is GTPase Der, found in Treponema pallidum subsp. pallidum (strain SS14).